The following is a 154-amino-acid chain: 6,7-dimethyl-8-ribityllumazine synthase (154 aa).

Residues phenylalanine 22, 56–58, and 80–82 each bind 5-amino-6-(D-ribitylamino)uracil; these read AFE and TVI. A (2S)-2-hydroxy-3-oxobutyl phosphate-binding site is contributed by 85 to 86; sequence AT. The active-site Proton donor is the histidine 88. Phenylalanine 113 contacts 5-amino-6-(D-ribitylamino)uracil. Arginine 127 serves as a coordination point for (2S)-2-hydroxy-3-oxobutyl phosphate.

It belongs to the DMRL synthase family. Forms an icosahedral capsid composed of 60 subunits, arranged as a dodecamer of pentamers.

The catalysed reaction is (2S)-2-hydroxy-3-oxobutyl phosphate + 5-amino-6-(D-ribitylamino)uracil = 6,7-dimethyl-8-(1-D-ribityl)lumazine + phosphate + 2 H2O + H(+). It functions in the pathway cofactor biosynthesis; riboflavin biosynthesis; riboflavin from 2-hydroxy-3-oxobutyl phosphate and 5-amino-6-(D-ribitylamino)uracil: step 1/2. Its function is as follows. Catalyzes the formation of 6,7-dimethyl-8-ribityllumazine by condensation of 5-amino-6-(D-ribitylamino)uracil with 3,4-dihydroxy-2-butanone 4-phosphate. This is the penultimate step in the biosynthesis of riboflavin. This is 6,7-dimethyl-8-ribityllumazine synthase from Bacillus licheniformis (strain ATCC 14580 / DSM 13 / JCM 2505 / CCUG 7422 / NBRC 12200 / NCIMB 9375 / NCTC 10341 / NRRL NRS-1264 / Gibson 46).